Here is a 359-residue protein sequence, read N- to C-terminus: POU domain, class 5, transcription factor 1B (359 aa).

2 disordered regions span residues 1–53 (MAGH…GVGP) and 87–116 (QGGLETSQPESEAGVGVESNSNGASPEPCT). Position 111 is a phosphoserine (Ser-111). The 75-residue stretch at 138–212 (DIKALQKELE…LLQKWVEEAD (75 aa)) folds into the POU-specific domain. The homeobox DNA-binding region spans 229–288 (ARKRKRTSIENRVRGNLENLFLQCPKPTLQISHIAQQLGLEKDVVRVWFCNRRQKGKRSS). Thr-235 is modified (phosphothreonine). 3 positions are modified to phosphoserine: Ser-236, Ser-288, and Ser-289. The disordered stretch occupies residues 287 to 322 (SSSDYAQREDFEAAGSPFSGGPVSFPPAPGPHFGTP). A compositionally biased stretch (low complexity) spans 299–309 (AAGSPFSGGPV). Ser-354 is subject to Phosphoserine.

Belongs to the POU transcription factor family. Class-5 subfamily. Detected in epithelial cells of the prostate (at protein level). Detected at the mRNA level in several cancer tissues (breast, uterine cervix, lung, thyroid gland, esophagus, colon, urinary bladder, and glioma).

It localises to the nucleus. Its subcellular location is the cytoplasm. Its function is as follows. Shows weak transcriptional activator activity. In Homo sapiens (Human), this protein is POU domain, class 5, transcription factor 1B (POU5F1B).